The chain runs to 185 residues: Ribosome-recycling factor (185 aa).

Positions 145–164 (DGEAGEDEVSRAEKDLDKTT) are disordered.

It belongs to the RRF family.

The protein resides in the cytoplasm. Functionally, responsible for the release of ribosomes from messenger RNA at the termination of protein biosynthesis. May increase the efficiency of translation by recycling ribosomes from one round of translation to another. The protein is Ribosome-recycling factor of Mycobacterium sp. (strain JLS).